A 147-amino-acid polypeptide reads, in one-letter code: Small ribosomal subunit protein uS5 (147 aa).

Residues 9–72 enclose the S5 DRBM domain; it reads FEEVIVDIGR…DDAFKNIVEV (64 aa).

Belongs to the universal ribosomal protein uS5 family. Part of the 30S ribosomal subunit. Contacts proteins S4 and S8.

In terms of biological role, with S4 and S12 plays an important role in translational accuracy. Its function is as follows. Located at the back of the 30S subunit body where it stabilizes the conformation of the head with respect to the body. This is Small ribosomal subunit protein uS5 from Campylobacter fetus subsp. fetus (strain 82-40).